A 258-amino-acid polypeptide reads, in one-letter code: DNA repair protein RecO (258 aa).

The protein belongs to the RecO family.

Its function is as follows. Involved in DNA repair and RecF pathway recombination. The chain is DNA repair protein RecO from Syntrophotalea carbinolica (strain DSM 2380 / NBRC 103641 / GraBd1) (Pelobacter carbinolicus).